We begin with the raw amino-acid sequence, 1941 residues long: WD repeat-containing protein 81 (1941 aa).

The interval 1–27 is disordered; that stretch reads MAQGSGGREGALRTPAGGWHSPPSPDM. The interval 1–650 is necessary and sufficient for the interaction with SQSTM1; that stretch reads MAQGSGGREG…TPCEASWTRD (650 aa). The BEACH domain maps to 337-614; it reads GQPTGQEELR…IPKLLVQTIQ (278 aa). Disordered regions lie at residues 618 to 637, 694 to 718, 1022 to 1074, 1097 to 1217, 1523 to 1556, and 1569 to 1602; these read GRED…GRPV, VASA…EEGR, SKDL…VSFH, PQEA…EGKE, PSSR…DGHS, and QIPN…DNAL. Polar residues predominate over residues 1137–1146; the sequence is LRSGDSSQDL. Positions 1151-1174 are enriched in acidic residues; sequence GSEEEEEEEDSCVVLEEEEGEQEE. The segment covering 1586 to 1595 has biased composition (gly residues); sequence SGVGGGGLGS. WD repeat units lie at residues 1639 to 1677, 1686 to 1724, 1729 to 1769, 1777 to 1815, 1819 to 1856, 1860 to 1896, and 1902 to 1941; these read IRLQ…LWPL, ETAP…VWDP, TLRT…FVDC, EFRL…LLDT, LVLR…VWKE, KPTH…VCSL, and QATT…RLLA.

It belongs to the WD repeat WDR81 family. Interacts with WDR91; involved in early to late endosome cargo transport. Interacts with BECN1; negatively regulates the PI3 kinase/PI3K activity associated with endosomal membranes. Interacts with SQSTM1; the interaction is direct and regulates the interaction of SQSTM1 with ubiquitinated proteins. Interacts with MAP1LC3C; recruits MAP1LC3C to ubiquitinated protein aggregates in the aggrephagy process. As to expression, widely expressed. In the brain, highest levels in cerebellum and corpus callosum.

It localises to the early endosome membrane. Its subcellular location is the late endosome membrane. It is found in the lysosome membrane. The protein resides in the cytoplasmic vesicle. The protein localises to the autophagosome membrane. It localises to the mitochondrion. Its subcellular location is the cytoplasm. It is found in the cytosol. In terms of biological role, functions as a negative regulator of the PI3 kinase/PI3K activity associated with endosomal membranes via BECN1, a core subunit of the PI3K complex. By modifying the phosphatidylinositol 3-phosphate/PtdInsP3 content of endosomal membranes may regulate endosome fusion, recycling, sorting and early to late endosome transport. It is for instance, required for the delivery of cargos like BST2/tetherin from early to late endosome and thereby participates indirectly to their degradation by the lysosome. May also play a role in aggrephagy, the macroautophagic degradation of ubiquitinated protein aggregates. In this process, may regulate the interaction of SQSTM1 with ubiquitinated proteins and also recruit MAP1LC3C. May also be involved in maintenance of normal mitochondrial structure and organization. This is WD repeat-containing protein 81 from Homo sapiens (Human).